A 455-amino-acid chain; its full sequence is Probable pectate lyase 6 (455 aa).

The first 25 residues, 1–25 (MVNLGSYVFVFVALSLTVVVPSVQA), serve as a signal peptide directing secretion. N55 and N75 each carry an N-linked (GlcNAc...) asparagine glycan. 3 residues coordinate Ca(2+): D247, D271, and D275. R327 is a catalytic residue.

This sequence belongs to the polysaccharide lyase 1 family. Ca(2+) is required as a cofactor.

It carries out the reaction Eliminative cleavage of (1-&gt;4)-alpha-D-galacturonan to give oligosaccharides with 4-deoxy-alpha-D-galact-4-enuronosyl groups at their non-reducing ends.. The protein operates within glycan metabolism; pectin degradation; 2-dehydro-3-deoxy-D-gluconate from pectin: step 2/5. The polypeptide is Probable pectate lyase 6 (Arabidopsis thaliana (Mouse-ear cress)).